The following is a 1941-amino-acid chain: Diacylglycerol kinase eta (1941 aa).

The PH domain maps to 93-186; sequence SIIKEGYLLK…WLGSLKAATA (94 aa). 2 Phorbol-ester/DAG-type zinc fingers span residues 206–256 and 279–330; these read HHHW…IANC and PHQW…AIAC. The region spanning 361–497 is the DAGKc domain; it reads GNFSPLLVFV…DRWSIMVFEK (137 aa). Disordered regions lie at residues 1030–1068, 1132–1164, 1215–1257, and 1276–1295; these read TTTLCSEHMGPPKPPRKKSMSALSKSQIHPRRRNSSPPR, CNSNNNSNNNSNSNSNNNNHNDGNSNDEPETPT, LESA…PSSS, and RRHSSHAPSLAVREYDKDKD. The segment covering 1133 to 1155 has biased composition (low complexity); the sequence is NSNNNSNNNSNSNSNNNNHNDGN. An SAM domain is found at 1878–1941; the sequence is WSVNEVVTWL…LQAIKDLSEN (64 aa).

The protein belongs to the eukaryotic diacylglycerol kinase family.

It localises to the cytoplasm. The enzyme catalyses a 1,2-diacyl-sn-glycerol + ATP = a 1,2-diacyl-sn-glycero-3-phosphate + ADP + H(+). Phosphorylates diacylglycerol (DAG) to generate phosphatidic acid (PA). This is Diacylglycerol kinase eta from Drosophila grimshawi (Hawaiian fruit fly).